The chain runs to 215 residues: Probable transaldolase (215 aa).

Residue Lys84 is the Schiff-base intermediate with substrate of the active site.

It belongs to the transaldolase family. Type 3B subfamily.

Its subcellular location is the cytoplasm. It carries out the reaction D-sedoheptulose 7-phosphate + D-glyceraldehyde 3-phosphate = D-erythrose 4-phosphate + beta-D-fructose 6-phosphate. It participates in carbohydrate degradation; pentose phosphate pathway; D-glyceraldehyde 3-phosphate and beta-D-fructose 6-phosphate from D-ribose 5-phosphate and D-xylulose 5-phosphate (non-oxidative stage): step 2/3. Its function is as follows. Transaldolase is important for the balance of metabolites in the pentose-phosphate pathway. The polypeptide is Probable transaldolase (Exiguobacterium sibiricum (strain DSM 17290 / CCUG 55495 / CIP 109462 / JCM 13490 / 255-15)).